The sequence spans 319 residues: Probable enoyl-CoA hydratase alpha subunit (319 aa).

Residues 199 to 298 (FEAAKQRRLV…EIGMPVVLDW (100 aa)) form a DUF35 region.

The protein belongs to the thioester dehydratase family. As to quaternary structure, heterodimer composed of ChsH1 and ChsH2. Two heterodimers combine to form a heterotetramer. The complex interacts with Ltp2 via the DUF35 C-terminal region of ChsH2.

Probably involved in bile acid degradation. In Thermomonospora curvata (strain ATCC 19995 / DSM 43183 / JCM 3096 / KCTC 9072 / NBRC 15933 / NCIMB 10081 / Henssen B9), this protein is Probable enoyl-CoA hydratase alpha subunit.